Reading from the N-terminus, the 157-residue chain is Ribosomal RNA large subunit methyltransferase H (157 aa).

S-adenosyl-L-methionine is bound by residues L73, G104, and L123 to L128.

Belongs to the RNA methyltransferase RlmH family. As to quaternary structure, homodimer.

It is found in the cytoplasm. The enzyme catalyses pseudouridine(1915) in 23S rRNA + S-adenosyl-L-methionine = N(3)-methylpseudouridine(1915) in 23S rRNA + S-adenosyl-L-homocysteine + H(+). In terms of biological role, specifically methylates the pseudouridine at position 1915 (m3Psi1915) in 23S rRNA. The protein is Ribosomal RNA large subunit methyltransferase H of Xylella fastidiosa (strain M23).